The primary structure comprises 392 residues: Extracellular metalloproteinase 4 (392 aa).

Residues 1-9 (VHSVVDYVS) constitute a propeptide that is removed on maturation. N-linked (GlcNAc...) asparagine glycans are attached at residues Asn-27 and Asn-176. His-193 contacts Zn(2+). Glu-194 is an active-site residue. A Zn(2+)-binding site is contributed by His-197. Residues Asn-359 and Asn-385 are each glycosylated (N-linked (GlcNAc...) asparagine).

This sequence belongs to the peptidase M36 family. Zn(2+) serves as cofactor.

Its subcellular location is the secreted. In terms of biological role, secreted metalloproteinase probably acting as a virulence factor. The protein is Extracellular metalloproteinase 4 (MEP4) of Trichophyton violaceum.